Reading from the N-terminus, the 41-residue chain is Omega-theraphotoxin-Hg1a (41 aa).

Disulfide bonds link C7–C21, C14–C26, and C20–C33.

It belongs to the neurotoxin 10 (Hwtx-1) family. 56 (SNX-482) subfamily. Expressed by the venom gland.

The protein resides in the secreted. Toxin that blocks vertebrate P/Q-type (Cav2.1/CACNA1A) and R-type (Cav2.3/CACNA1E) voltage-gated calcium channels. Also inhibits sodium channels (Nav) in bovine chromaffin cells by delaying sodium channel inactivation. This chain is Omega-theraphotoxin-Hg1a, found in Hysterocrates gigas (Cameroon red baboon tarantula).